The primary structure comprises 863 residues: NACHT, LRR and PYD domains-containing protein 4B (863 aa).

Residues 1–93 (MASLFSDFGF…TNRATGEIAA (93 aa)) enclose the Pyrin domain. An NACHT domain is found at 143–466 (KMVVLQGVAG…FYLLHSEMDH (324 aa)). 149–156 (GVAGIGKT) contacts ATP. 7 LRR repeats span residues 618–643 (WHQICSVFLRNKDIKTLRIEDTIFNE), 683–706 (SYNLEELYLRGTFLSHSDVEMLCD), 717–740 (ILDLANCSLCEHSWDYLSDVLRQN), 741–763 (KSLRYLNISYNNLKDEGLKALCR), 765–782 (LTLPNSALHSLSLEACQL), 797–824 (YKCLRRINLAKNSLGFSGLFVLCKAMKD), and 843–863 (SQEFLLSEMERNKILSIENGV).

Belongs to the NLRP family.

May be involved in inflammation and recognition of cytosolic pathogen-associated molecular patterns (PAMPs) not intercepted by membrane-bound receptors. The protein is NACHT, LRR and PYD domains-containing protein 4B (Nlrp4b) of Mus musculus (Mouse).